The primary structure comprises 341 residues: Farnesyl pyrophosphate synthase (341 aa).

Isopentenyl diphosphate-binding residues include lysine 48, arginine 51, and glutamine 86. 2 residues coordinate Mg(2+): aspartate 93 and aspartate 97. Arginine 102 provides a ligand contact to dimethylallyl diphosphate. Residue arginine 103 coordinates isopentenyl diphosphate. 4 residues coordinate dimethylallyl diphosphate: lysine 190, threonine 191, glutamine 229, and lysine 246.

Belongs to the FPP/GGPP synthase family. It depends on Mg(2+) as a cofactor.

Its subcellular location is the cytoplasm. The enzyme catalyses isopentenyl diphosphate + dimethylallyl diphosphate = (2E)-geranyl diphosphate + diphosphate. It carries out the reaction isopentenyl diphosphate + (2E)-geranyl diphosphate = (2E,6E)-farnesyl diphosphate + diphosphate. The protein operates within isoprenoid biosynthesis; farnesyl diphosphate biosynthesis; farnesyl diphosphate from geranyl diphosphate and isopentenyl diphosphate: step 1/1. It functions in the pathway isoprenoid biosynthesis; geranyl diphosphate biosynthesis; geranyl diphosphate from dimethylallyl diphosphate and isopentenyl diphosphate: step 1/1. Catalyzes the sequential condensation of isopentenyl pyrophosphate with the allylic pyrophosphates, dimethylallyl pyrophosphate, and then with the resultant geranylpyrophosphate to the ultimate product farnesyl pyrophosphate. The polypeptide is Farnesyl pyrophosphate synthase (FPS1) (Helianthus annuus (Common sunflower)).